The sequence spans 233 residues: MKAAILVFPGINRDRDMARALRLISGSEPAMVWHAETSLPAGTDLVVVPGGFSYGDYLRCGAIAARAPVMDAVRDYAAKGGLVLGVCNGFQILCESGLLPGVLMRNAQLKFICRDVHLRVERSDTPFTRGYNAGQVIRVPVAHGEGNYEADEETIQRLEGEGRVLYRYCSAEGVVDEAANINGAAHSIAGIVNDKGNVLGMMPHPENHVEDIMGCTDGRGLFAGLAQHLEKAA.

In terms of domain architecture, Glutamine amidotransferase type-1 spans 3–233; the sequence is AAILVFPGIN…GLAQHLEKAA (231 aa). The active-site Nucleophile is C87. Catalysis depends on residues H204 and E206.

Part of the FGAM synthase complex composed of 1 PurL, 1 PurQ and 2 PurS subunits.

The protein resides in the cytoplasm. It carries out the reaction N(2)-formyl-N(1)-(5-phospho-beta-D-ribosyl)glycinamide + L-glutamine + ATP + H2O = 2-formamido-N(1)-(5-O-phospho-beta-D-ribosyl)acetamidine + L-glutamate + ADP + phosphate + H(+). The catalysed reaction is L-glutamine + H2O = L-glutamate + NH4(+). It functions in the pathway purine metabolism; IMP biosynthesis via de novo pathway; 5-amino-1-(5-phospho-D-ribosyl)imidazole from N(2)-formyl-N(1)-(5-phospho-D-ribosyl)glycinamide: step 1/2. Part of the phosphoribosylformylglycinamidine synthase complex involved in the purines biosynthetic pathway. Catalyzes the ATP-dependent conversion of formylglycinamide ribonucleotide (FGAR) and glutamine to yield formylglycinamidine ribonucleotide (FGAM) and glutamate. The FGAM synthase complex is composed of three subunits. PurQ produces an ammonia molecule by converting glutamine to glutamate. PurL transfers the ammonia molecule to FGAR to form FGAM in an ATP-dependent manner. PurS interacts with PurQ and PurL and is thought to assist in the transfer of the ammonia molecule from PurQ to PurL. This Bradyrhizobium diazoefficiens (strain JCM 10833 / BCRC 13528 / IAM 13628 / NBRC 14792 / USDA 110) protein is Phosphoribosylformylglycinamidine synthase subunit PurQ.